An 831-amino-acid chain; its full sequence is ATP-dependent RNA helicase DBP7 (831 aa).

A compositionally biased stretch (polar residues) spans 65 to 75 (ATDVNRTQLGQ). Residues 65-180 (ATDVNRTQLG…EPIEPSNAPL (116 aa)) form a disordered region. The segment covering 82–112 (KSPEVHEDIDRPAKRARVSGDFRPKSNEKSA) has biased composition (basic and acidic residues). The span at 146 to 162 (VISSLFTYNPTSTTKTQ) shows a compositional bias: polar residues. Positions 185–214 (DTFTSLGISTTLAAHLLKKMDLKAPTAIQK) match the Q motif motif. The region spanning 218 to 419 (TQLVKDDSDA…QISLKDAVHL (202 aa)) is the Helicase ATP-binding domain. Position 231–238 (231–238 (AETGSGKT)) interacts with ATP. The short motif at 353–356 (DEGD) is the DEAD box element. 2 disordered regions span residues 419–441 (LRAD…SYAP) and 501–543 (KNEK…SVTH). In terms of domain architecture, Helicase C-terminal spans 456 to 670 (RLVSLIAYLK…ITRQDADDIL (215 aa)). A compositionally biased stretch (basic and acidic residues) spans 501–512 (KNEKAEGTKDDT).

It belongs to the DEAD box helicase family. DDX31/DBP7 subfamily.

The protein localises to the nucleus. It is found in the nucleolus. The enzyme catalyses ATP + H2O = ADP + phosphate + H(+). ATP-binding RNA helicase involved in the biogenesis of 60S ribosomal subunits and is required for the normal formation of 25S and 5.8S rRNAs. This Phaeosphaeria nodorum (strain SN15 / ATCC MYA-4574 / FGSC 10173) (Glume blotch fungus) protein is ATP-dependent RNA helicase DBP7 (DBP7).